Consider the following 424-residue polypeptide: Zinc metalloproteinase-disintegrin-like brevilysin H2b (424 aa).

The residue at position 1 (Q1) is a Pyrrolidone carboxylic acid. The Peptidase M12B domain maps to 9 to 207 (RYVKLAIVAD…YKPQCILNEP (199 aa)). N-linked (GlcNAc...) asparagine glycosylation is present at N69. D96 contributes to the Ca(2+) binding site. Cystine bridges form between C120/C202, C164/C186, and C166/C169. H145 contributes to the Zn(2+) binding site. Residue E146 is part of the active site. The Zn(2+) site is built by H149 and H155. An N-linked (GlcNAc...) asparagine glycan is attached at N185. Ca(2+)-binding residues include C202, N205, V217, N220, L222, E224, E227, and D230. Positions 215 to 301 (PPVCGNELLE…DCPTDDLQRN (87 aa)) constitute a Disintegrin domain. Cystine bridges form between C218/C247, C229/C242, C231/C237, C241/C264, C255/C261, C260/C286, C273/C293, C280/C312, C305/C317, C324/C374, C339/C385, C352/C362, C369/C411, and C405/C417. Residues 279–281 (DCD) carry the D/ECD-tripeptide motif. Ca(2+)-binding residues include D281, E284, and D296.

Belongs to the venom metalloproteinase (M12B) family. P-III subfamily. P-IIIa sub-subfamily. As to quaternary structure, monomer. It depends on Zn(2+) as a cofactor. Glycosylated. In terms of tissue distribution, expressed by the venom gland.

The protein resides in the secreted. With respect to regulation, its proteolytic activity is inhibited by EDTA, TPEN, 1,10-phenanthroline, and some thiol compounds, but is enhanced by alkaline earth metal ions (Mg2+, Ca2+, Sr2+, and Ba2+). Its activity is not modulated by urea (4 M). Functionally, non-hemorrhagic metalloproteinase that degrades fibrinogen. The alpha chain (FGA) is rapidly degraded, the beta chain (FGB) is degraded very slowly, while the gamma chain is left intact. Shows a prefential cleavage at X-Leu bonds. Cleaves insulin B chain at '29-His-|-Leu-30', '33-Ser-|-His-34', '38-Ala-|-Leu-39' and '40-Tyr-|-Leu-41' bonds. This chain is Zinc metalloproteinase-disintegrin-like brevilysin H2b, found in Gloydius brevicauda (Korean slamosa snake).